We begin with the raw amino-acid sequence, 429 residues long: MPAIVLIGAQWGDEGKGKATDLLGGRLQWVVRYQGGNNAGHTVVLPNGDKFALHLIPSGILTPGVTNVIGNGVVVDPGVLLTELAGLDQRGVDTSRLLLSADAHLIMPYHVAIDKVTERFLGAKKIGTTGRGIGPCYQDKLARVGVRVQDVLDEKILTQKVEAALEFKNQVLVKIYNRKALDPQQVVDEVLEQADGFKHRIADTRLQLNEALERGETVLLEGSQGTLLDVDHGTYPYVTSSNPTSGGAAVGSGIGPTKITTVLGILKAYTTRVGSGPFPTELFDQNGEYLAKTGGEVGVTTGRARRTGWFDAVIARYATRVNGITDYFLTKLDVLSSLDTIPICVGYDVDGVRHDEMPMSQTDVHHAKPIYEEMPGWWEDISHARTFEELPKNAQNYVLRLEELSGAYISCIGVGPGRDETIVRRDVVR.

GTP contacts are provided by residues 12–18 (GDEGKGK) and 40–42 (GHT). Asp-13 acts as the Proton acceptor in catalysis. 2 residues coordinate Mg(2+): Asp-13 and Gly-40. IMP is bound by residues 13-16 (DEGK), 38-41 (NAGH), Thr-129, Arg-143, Gln-224, Thr-239, and Arg-303. The active-site Proton donor is the His-41. 299–305 (VTTGRAR) serves as a coordination point for substrate. Residues Arg-305, 331–333 (KLD), and 413–415 (GVG) contribute to the GTP site.

This sequence belongs to the adenylosuccinate synthetase family. Homodimer. It depends on Mg(2+) as a cofactor.

The protein localises to the cytoplasm. The catalysed reaction is IMP + L-aspartate + GTP = N(6)-(1,2-dicarboxyethyl)-AMP + GDP + phosphate + 2 H(+). It participates in purine metabolism; AMP biosynthesis via de novo pathway; AMP from IMP: step 1/2. Functionally, plays an important role in the de novo pathway of purine nucleotide biosynthesis. Catalyzes the first committed step in the biosynthesis of AMP from IMP. The polypeptide is Adenylosuccinate synthetase (Rhodococcus opacus (strain B4)).